Here is a 389-residue protein sequence, read N- to C-terminus: Pyruvylated Gal-beta-1,3-epitope synthesis protein 2 (389 aa).

Residues 1-16 are Cytoplasmic-facing; that stretch reads MTKLWVNFFSQKLLRL. A helical membrane pass occupies residues 17 to 37; it reads LIPSIIVVFAFAALFAIYSPI. The Lumenal portion of the chain corresponds to 38–389; the sequence is QLGGINFYKR…WSNSFDLITA (352 aa).

The protein resides in the endoplasmic reticulum membrane. It is found in the golgi apparatus membrane. Functionally, involved in cell wall biogenesis. Has a role in the addition of Gal-beta1,3 moeities to galactomannans and their subsequent pyruvylation. Has a role in meiosis. The protein is Pyruvylated Gal-beta-1,3-epitope synthesis protein 2 (pvg2) of Schizosaccharomyces pombe (strain 972 / ATCC 24843) (Fission yeast).